A 338-amino-acid chain; its full sequence is MGTDIGDLLQKRKIELSDLSNRVVAVDAFNTLHQFLSIIRQRDGSPLVNSRGKVTSHLSGLLYRTASLVEAGIKPVFIFDGKPPDLKSETLSRRKEVRETSLEKWENAKAEGDLEAAYKYAQASSRVDQEIVEDSKYLLGIMGIPWIQAPCEGEAQAAHMVLKKDADYVASQDYDSFLFGAPKVVRNMAVTGKRKLPGKNVYVDVELEVIELEETLRALEINRDQLIDIAICVGTDYNKGLEKVGPKTALKLIKKHGDIHAVLREKDMEIEGLDRIRKLFTHPEVTEDYEIKWTKPDSEKLIKFLCEENDFSTDRVEKAAERLKAASGARQKTLDQWF.

The N-domain stretch occupies residues 1-98 (MGTDIGDLLQ…ETLSRRKEVR (98 aa)). 7 residues coordinate Mg(2+): D27, D80, E152, E154, D173, D175, and D236. Residues 116–257 (AAYKYAQASS…TALKLIKKHG (142 aa)) form an I-domain region. Positions 330–338 (RQKTLDQWF) are interaction with PCNA.

This sequence belongs to the XPG/RAD2 endonuclease family. FEN1 subfamily. As to quaternary structure, interacts with PCNA. PCNA stimulates the nuclease activity without altering cleavage specificity. Mg(2+) serves as cofactor.

Functionally, structure-specific nuclease with 5'-flap endonuclease and 5'-3' exonuclease activities involved in DNA replication and repair. During DNA replication, cleaves the 5'-overhanging flap structure that is generated by displacement synthesis when DNA polymerase encounters the 5'-end of a downstream Okazaki fragment. Binds the unpaired 3'-DNA end and kinks the DNA to facilitate 5' cleavage specificity. Cleaves one nucleotide into the double-stranded DNA from the junction in flap DNA, leaving a nick for ligation. Also involved in the base excision repair (BER) pathway. Acts as a genome stabilization factor that prevents flaps from equilibrating into structures that lead to duplications and deletions. Also possesses 5'-3' exonuclease activity on nicked or gapped double-stranded DNA. The polypeptide is Flap endonuclease 1 (Methanosarcina acetivorans (strain ATCC 35395 / DSM 2834 / JCM 12185 / C2A)).